Here is a 199-residue protein sequence, read N- to C-terminus: ATP-dependent Clp protease proteolytic subunit (199 aa).

The active-site Nucleophile is serine 97. Histidine 122 is an active-site residue.

Belongs to the peptidase S14 family. In terms of assembly, fourteen ClpP subunits assemble into 2 heptameric rings which stack back to back to give a disk-like structure with a central cavity, resembling the structure of eukaryotic proteasomes.

It is found in the cytoplasm. The catalysed reaction is Hydrolysis of proteins to small peptides in the presence of ATP and magnesium. alpha-casein is the usual test substrate. In the absence of ATP, only oligopeptides shorter than five residues are hydrolyzed (such as succinyl-Leu-Tyr-|-NHMec, and Leu-Tyr-Leu-|-Tyr-Trp, in which cleavage of the -Tyr-|-Leu- and -Tyr-|-Trp bonds also occurs).. Its function is as follows. Cleaves peptides in various proteins in a process that requires ATP hydrolysis. Has a chymotrypsin-like activity. Plays a major role in the degradation of misfolded proteins. This is ATP-dependent Clp protease proteolytic subunit from Citrifermentans bemidjiense (strain ATCC BAA-1014 / DSM 16622 / JCM 12645 / Bem) (Geobacter bemidjiensis).